The sequence spans 721 residues: Catalase-peroxidase (721 aa).

The segment at residues 95 to 223 (WHSAGSYRLF…LGAVHMGLIY (129 aa)) is a cross-link (tryptophyl-tyrosyl-methioninium (Trp-Tyr) (with M-249)). His96 serves as the catalytic Proton acceptor. A cross-link (tryptophyl-tyrosyl-methioninium (Tyr-Met) (with W-95)) is located at residues 223 to 249 (YVNPQGRDGKPDPLKSAHDVRVTFKRM). His264 lines the heme b pocket.

It belongs to the peroxidase family. Peroxidase/catalase subfamily. As to quaternary structure, homodimer or homotetramer. The cofactor is heme b. Formation of the three residue Trp-Tyr-Met cross-link is important for the catalase, but not the peroxidase activity of the enzyme.

The catalysed reaction is H2O2 + AH2 = A + 2 H2O. It catalyses the reaction 2 H2O2 = O2 + 2 H2O. In terms of biological role, bifunctional enzyme with both catalase and broad-spectrum peroxidase activity. The sequence is that of Catalase-peroxidase from Parvibaculum lavamentivorans (strain DS-1 / DSM 13023 / NCIMB 13966).